The sequence spans 412 residues: Histidine--tRNA ligase (412 aa).

The protein belongs to the class-II aminoacyl-tRNA synthetase family. In terms of assembly, homodimer.

It localises to the cytoplasm. The catalysed reaction is tRNA(His) + L-histidine + ATP = L-histidyl-tRNA(His) + AMP + diphosphate + H(+). This chain is Histidine--tRNA ligase, found in Maridesulfovibrio salexigens (strain ATCC 14822 / DSM 2638 / NCIMB 8403 / VKM B-1763) (Desulfovibrio salexigens).